The sequence spans 518 residues: 2,3-bisphosphoglycerate-independent phosphoglycerate mutase (518 aa).

Mn(2+)-binding residues include Asp-14 and Ser-64. Ser-64 functions as the Phosphoserine intermediate in the catalytic mechanism. Substrate-binding positions include His-125, Arg-155–Asp-156, Arg-187, Arg-193, Arg-264–Arg-267, and Lys-337. Asp-404, His-408, Asp-445, His-446, and His-467 together coordinate Mn(2+).

This sequence belongs to the BPG-independent phosphoglycerate mutase family. Mn(2+) serves as cofactor.

It carries out the reaction (2R)-2-phosphoglycerate = (2R)-3-phosphoglycerate. The protein operates within carbohydrate degradation; glycolysis; pyruvate from D-glyceraldehyde 3-phosphate: step 3/5. Its function is as follows. Catalyzes the interconversion of 2-phosphoglycerate and 3-phosphoglycerate. In Methanococcoides burtonii (strain DSM 6242 / NBRC 107633 / OCM 468 / ACE-M), this protein is 2,3-bisphosphoglycerate-independent phosphoglycerate mutase.